The sequence spans 94 residues: Small ubiquitin-related modifier 3-like (94 aa).

A Glycyl lysine isopeptide (Lys-Gly) (interchain with G-Cter in SUMO) cross-link involves residue Lys-11. A Ubiquitin-like domain is found at Asp-15–Gly-92. Gly-92 participates in a covalent cross-link: Glycyl lysine isopeptide (Gly-Lys) (interchain with K-? in acceptor proteins). Residues Ser-93–Cys-94 constitute a propeptide that is removed on maturation.

The protein belongs to the ubiquitin family. SUMO subfamily. Interacts with sae2 and ube2i. Covalently attached to a number of proteins. In terms of processing, polymeric chains can be formed through Lys-11 cross-linking. Cleavage of precursor form by a sentrin-specific protease is necessary for function.

The protein resides in the cytoplasm. Its subcellular location is the nucleus. It is found in the PML body. Functionally, ubiquitin-like protein which can be covalently attached to target lysines either as a monomer or as a lysine-linked polymer. Does not seem to be involved in protein degradation and may function as an antagonist of ubiquitin in the degradation process. Plays a role in a number of cellular processes such as nuclear transport, DNA replication and repair, mitosis and signal transduction. Covalent attachment to its substrates requires prior activation by the E1 complex sae1-sae2 and linkage to the E2 enzyme ube2i. The protein is Small ubiquitin-related modifier 3-like (sumo3l) of Danio rerio (Zebrafish).